A 979-amino-acid polypeptide reads, in one-letter code: Zinc finger BED domain-containing protein 6 (979 aa).

Residues 1–89 are required for nucleolar localization; the sequence is MSVCTLSVPV…ILAKKFSKDL (89 aa). The BED-type 1 zinc finger occupies 130–187; sequence AKTSIVWHFFHVDPQYTWRAICNLCEKSVSRGKPGSHLGTSTLQRHLQARHSPHWTRA. Zn(2+)-binding residues include Cys-151, Cys-154, His-175, and His-180. Residues 207 to 232 form a disordered region; the sequence is PSSGSNGSFEYIPTDPLDDNRMGKKH. The BED-type 2 zinc-finger motif lies at 264–321; the sequence is AKTSAVWNFFYTDPQHISRAVCNICKRSVSRGRPGSHLGTSTLQRHLQATHPIHWAVA. 4 residues coordinate Zn(2+): Cys-285, Cys-288, His-309, and His-314. The segment at 333–383 is disordered; it reads DEAETERSDLLSDTLHGEKSTGSQDLTAEDLSDSDSDEPMLEVENRSESPI. Residues 337 to 351 show a composition bias toward basic and acidic residues; that stretch reads TERSDLLSDTLHGEK. Acidic residues predominate over residues 359 to 373; sequence TAEDLSDSDSDEPML. Phosphoserine is present on Ser-381. The HATC (Hobo-Ac-Tam3) domain stretch occupies residues 866-948; that stretch reads VVDEYFKEKY…EQLMFLKMNL (83 aa).

As to expression, expressed in pancreatic islet cells (at protein level).

It localises to the nucleus. Its subcellular location is the nucleolus. The protein localises to the cytoplasm. In terms of biological role, transcriptional repressor which binds to the consensus sequence 5'-GCTCGC-3', transcription regulation may be tissue-specific. Regulates the expression of target genes such as: IGF2, PGAP6/TMEM8, ENHO, and PIANP. Acts as a transcriptional repressor of growth factor IGF2, thereby negatively regulating postnatal growth of muscles and internal organs, especially in females. Negatively regulates myoblast differentiation and myoblast mitochondrial activity via its regulation of IGF2 transcription. Negatively regulates the cell cycle of myoblasts, potentially via transcriptional regulation of the E2F family of transcription factors such as: E2F1 and E2F2. Positively regulates the cell cycle and survival of pancreatic beta cells. Binds to the CDH2 gene and may directly repress CDH2 transcription. Probably by controlling CDH2 expression, regulates pancreatic beta cell adhesion, and formation of cell-to-cell junctions between pancreatic beta cells and neural crest stem cells. May also play a role in embryonic beta cell differentiation. May play a role in insulin sensitivity and glucose clearance. This Homo sapiens (Human) protein is Zinc finger BED domain-containing protein 6.